The following is a 539-amino-acid chain: MAAKEVKFASDARDRMLRGVDTLANAVKVTLGPKGRNVVIEKSFGAPRITKDGVTVAKEIELADKFENMGAQMLREVASKQNDKAGDGTTTATVLAQAIVREGSKAVAAGMNPMDVKRGIDLAVKAVVKDLETHAKKVSANSEIAQVATISANGDEEVGRILAEAMDKVGNEGVITVEEAKSLATELETVEGMQFDRGYLSPYFITNAEKLKVELDDPYILIHEKKLSNLQAMLPLLEAVVQSGKPLLIIAEDVEGEALATLVVNRLRGGLKVAAVKAPGFGDRRKAMLEDIAILTGGNVVSEDLGIKLENVTVNMLGRAKKVVIDKDNTTIVDGVGARTDIDARIAQIRQQIDTTTSDYDREKLQERLAKLAGGVAVIRVGGATEVEVKERKDRVDDALHATRAAVEEGILPGGGIALLRALKALDGLKAANDDQQSGIDIVRRALRAPARQIADNAGEDGAWIVGKLLESSDYNWGFNAATGEYEDLVKAGVIDPAKVVRTALQDAASVAALLITTEALVAELPKEEKAAPMPAMDF.

ATP is bound by residues Thr-30–Pro-33, Lys-51, Asp-87–Thr-91, Gly-415, Asn-480–Ala-482, and Asp-496.

The protein belongs to the chaperonin (HSP60) family. As to quaternary structure, forms a cylinder of 14 subunits composed of two heptameric rings stacked back-to-back. Interacts with the co-chaperonin GroES.

The protein localises to the cytoplasm. The catalysed reaction is ATP + H2O + a folded polypeptide = ADP + phosphate + an unfolded polypeptide.. Functionally, together with its co-chaperonin GroES, plays an essential role in assisting protein folding. The GroEL-GroES system forms a nano-cage that allows encapsulation of the non-native substrate proteins and provides a physical environment optimized to promote and accelerate protein folding. The sequence is that of Chaperonin GroEL 2 from Sphingopyxis alaskensis (strain DSM 13593 / LMG 18877 / RB2256) (Sphingomonas alaskensis).